The following is a 476-amino-acid chain: Calcium/calmodulin-dependent protein kinase type 1G (476 aa).

One can recognise a Protein kinase domain in the interval 23 to 277 (FIFMEVLGSG…CEKALSHPWI (255 aa)). ATP is bound by residues 29 to 37 (LGSGAFSEV) and Lys-52. The Proton acceptor role is filled by Asp-143. The interval 277–317 (IDGNTALHRDIYPSVSLQIQKNFAKSKWRQAFNAAAVVHHM) is autoinhibitory domain. Residues 297 to 318 (KNFAKSKWRQAFNAAAVVHHMR) are calmodulin-binding. A disordered region spans residues 325–352 (HSPGVRPEVENRPPETQASETSRPSSPE). Positions 338–352 (PETQASETSRPSSPE) are enriched in polar residues.

Belongs to the protein kinase superfamily. CAMK Ser/Thr protein kinase family. CaMK subfamily. In terms of processing, may be prenylated on Cys-473. In terms of tissue distribution, mainly expressed in brain with small amounts in skeletal muscles, kidney, spleen and liver. Strongly expressed in forebrain neocortex, striatum and limbic system.

The protein resides in the cytoplasm. It is found in the golgi apparatus membrane. It localises to the cell membrane. The catalysed reaction is L-seryl-[protein] + ATP = O-phospho-L-seryl-[protein] + ADP + H(+). The enzyme catalyses L-threonyl-[protein] + ATP = O-phospho-L-threonyl-[protein] + ADP + H(+). Its activity is regulated as follows. Activated by Ca(2+)/calmodulin. Binding of calmodulin is thought to result in a conformational change and leads to activation through phosphorylation by CAMKK1. Functionally, calcium/calmodulin-dependent protein kinase belonging to a proposed calcium-triggered signaling cascade. In vitro phosphorylates transcription factor CREB1. This chain is Calcium/calmodulin-dependent protein kinase type 1G (CAMK1G), found in Homo sapiens (Human).